Here is a 142-residue protein sequence, read N- to C-terminus: Transcription antitermination protein NusB (142 aa).

It belongs to the NusB family.

Functionally, involved in transcription antitermination. Required for transcription of ribosomal RNA (rRNA) genes. Binds specifically to the boxA antiterminator sequence of the ribosomal RNA (rrn) operons. This chain is Transcription antitermination protein NusB, found in Streptomyces coelicolor (strain ATCC BAA-471 / A3(2) / M145).